A 61-amino-acid chain; its full sequence is Small ribosomal subunit protein uS14 (61 aa).

Residues Cys-24, Cys-27, Cys-40, and Cys-43 each contribute to the Zn(2+) site.

Belongs to the universal ribosomal protein uS14 family. Zinc-binding uS14 subfamily. As to quaternary structure, part of the 30S ribosomal subunit. Contacts proteins S3 and S10. Zn(2+) serves as cofactor.

Binds 16S rRNA, required for the assembly of 30S particles and may also be responsible for determining the conformation of the 16S rRNA at the A site. This chain is Small ribosomal subunit protein uS14, found in Leptospira biflexa serovar Patoc (strain Patoc 1 / Ames).